The primary structure comprises 155 residues: Large ribosomal subunit protein uL30 (155 aa).

This sequence belongs to the universal ribosomal protein uL30 family. In terms of assembly, part of the 50S ribosomal subunit.

The sequence is that of Large ribosomal subunit protein uL30 from Pyrococcus horikoshii (strain ATCC 700860 / DSM 12428 / JCM 9974 / NBRC 100139 / OT-3).